Consider the following 765-residue polypeptide: Lysyl oxidase homolog 2 (765 aa).

Residues 1–19 (MLVSHVFLLTLSLSVPSLG) form the signal peptide. 4 consecutive SRCR domains span residues 49–150 (VRLA…VQCS), 179–293 (IRPI…VSCT), 317–416 (VRLR…VRCN), and 426–535 (VRLS…VSCV). 9 disulfide bridges follow: Cys-75–Cys-139, Cys-88–Cys-149, Cys-119–Cys-129, Cys-209–Cys-282, Cys-222–Cys-292, Cys-256–Cys-266, Cys-342–Cys-405, Cys-355–Cys-415, and Cys-386–Cys-396. Asn-279 carries N-linked (GlcNAc...) asparagine glycosylation. Asn-446 carries an N-linked (GlcNAc...) asparagine glycan. Intrachain disulfides connect Cys-455–Cys-521, Cys-468–Cys-534, and Cys-502–Cys-512. Positions 539–742 (PDLVLNAALV…WMYNCHIGGS (204 aa)) are lysyl-oxidase like. The Ca(2+) site is built by Asp-540 and Leu-541. 4 cysteine pairs are disulfide-bonded: Cys-564–Cys-616, Cys-570–Cys-686, Cys-648–Cys-664, and Cys-654–Cys-676. Residues His-617, His-619, and His-621 each contribute to the Cu cation site. The N-linked (GlcNAc...) asparagine glycan is linked to Asn-635. The segment at residues 644-680 (KASFCLEDSECEADIQKQYVCANFGEQGITVGCWDLY) is a cross-link (lysine tyrosylquinone (Lys-Tyr)). Tyr-680 carries the post-translational modification 2',4',5'-topaquinone. Residues Glu-713, Asp-715, Asn-718, and Asn-719 each coordinate Ca(2+). Cys-723 and Cys-737 are disulfide-bonded.

This sequence belongs to the lysyl oxidase family. The cofactor is Cu cation. Requires lysine tyrosylquinone residue as cofactor. The lysine tyrosylquinone cross-link (LTQ) is generated by condensation of the epsilon-amino group of a lysine with a topaquinone produced by oxidation of tyrosine.

Its subcellular location is the secreted. The protein localises to the extracellular space. It localises to the extracellular matrix. It is found in the basement membrane. The protein resides in the nucleus. Its subcellular location is the chromosome. The protein localises to the endoplasmic reticulum. It catalyses the reaction L-lysyl-[protein] + O2 + H2O = (S)-2-amino-6-oxohexanoyl-[protein] + H2O2 + NH4(+). Functionally, mediates the post-translational oxidative deamination of lysine residues on target proteins leading to the formation of deaminated lysine (allysine). Acts as a transcription corepressor and specifically mediates deamination of trimethylated 'Lys-4' of histone H3 (H3K4me3), a specific tag for epigenetic transcriptional activation. Shows no activity against histone H3 when it is trimethylated on 'Lys-9' (H3K9me3) or 'Lys-27' (H3K27me3) or when 'Lys-4' is monomethylated (H3K4me1) or dimethylated (H3K4me2). Also mediates deamination of methylated TAF10, a member of the transcription factor IID (TFIID) complex, which induces release of TAF10 from promoters, leading to inhibition of TFIID-dependent transcription. LOXL2-mediated deamination of TAF10 results in transcriptional repression of genes required for embryonic stem cell pluripotency. Involved in epithelial to mesenchymal transition (EMT) and participates in repression of E-cadherin, probably by mediating deamination of histone H3. When secreted into the extracellular matrix, promotes cross-linking of extracellular matrix proteins by mediating oxidative deamination of peptidyl lysine residues in precursors to fibrous collagen and elastin. Acts as a regulator of sprouting angiogenesis, probably via collagen IV scaffolding. Acts as a regulator of chondrocyte differentiation, probably by regulating expression of factors that control chondrocyte differentiation. The protein is Lysyl oxidase homolog 2 (loxl2) of Xenopus laevis (African clawed frog).